The primary structure comprises 177 residues: Nicotinamide-nucleotide adenylyltransferase (177 aa).

It belongs to the archaeal NMN adenylyltransferase family.

It localises to the cytoplasm. It catalyses the reaction beta-nicotinamide D-ribonucleotide + ATP + H(+) = diphosphate + NAD(+). Its pathway is cofactor biosynthesis; NAD(+) biosynthesis; NAD(+) from nicotinamide D-ribonucleotide: step 1/1. This chain is Nicotinamide-nucleotide adenylyltransferase, found in Halobacterium salinarum (strain ATCC 29341 / DSM 671 / R1).